The sequence spans 208 residues: Ribosomal RNA small subunit methyltransferase G (208 aa).

Residues Gly78, Phe83, 101-103 (ERS), 129-130 (IE), and Arg142 contribute to the S-adenosyl-L-methionine site.

Belongs to the methyltransferase superfamily. RNA methyltransferase RsmG family.

It localises to the cytoplasm. In terms of biological role, specifically methylates the N7 position of a guanine in 16S rRNA. This is Ribosomal RNA small subunit methyltransferase G from Borreliella burgdorferi (strain ZS7) (Borrelia burgdorferi).